Consider the following 187-residue polypeptide: Cytochrome b-245 chaperone 1 (187 aa).

The chain crosses the membrane as a helical span at residues 20 to 42 (GIRSWSLLVGILSIGLAAAYYSG). Residue Ser168 is modified to Phosphoserine.

It belongs to the CYBC1 family. Interacts with CYBB; CYBC1 may act as a chaperone stabilizing Cytochrome b-245 heterodimer.

The protein localises to the endoplasmic reticulum membrane. Functions as a chaperone necessary for a stable expression of the CYBA and CYBB subunits of the cytochrome b-245 heterodimer. Controls the phagocyte respiratory burst and is essential for innate immunity. The sequence is that of Cytochrome b-245 chaperone 1 from Bos taurus (Bovine).